Here is a 517-residue protein sequence, read N- to C-terminus: Crotonobetaine/carnitine--CoA ligase (517 aa).

This sequence belongs to the ATP-dependent AMP-binding enzyme family.

The catalysed reaction is 4-(trimethylamino)butanoate + ATP + CoA = 4-(trimethylamino)butanoyl-CoA + AMP + diphosphate. It carries out the reaction crotonobetaine + ATP + CoA = crotonobetainyl-CoA + AMP + diphosphate. It catalyses the reaction (R)-carnitine + ATP + CoA = (R)-carnitinyl-CoA + AMP + diphosphate. The protein operates within amine and polyamine metabolism; carnitine metabolism. Its function is as follows. Catalyzes the transfer of CoA to carnitine, generating the initial carnitinyl-CoA needed for the CaiB reaction cycle. Also has activity toward crotonobetaine and gamma-butyrobetaine. This Escherichia coli (strain ATCC 8739 / DSM 1576 / NBRC 3972 / NCIMB 8545 / WDCM 00012 / Crooks) protein is Crotonobetaine/carnitine--CoA ligase.